Consider the following 129-residue polypeptide: Small ribosomal subunit protein uS11 (129 aa).

This sequence belongs to the universal ribosomal protein uS11 family. In terms of assembly, part of the 30S ribosomal subunit. Interacts with proteins S7 and S18. Binds to IF-3.

Functionally, located on the platform of the 30S subunit, it bridges several disparate RNA helices of the 16S rRNA. Forms part of the Shine-Dalgarno cleft in the 70S ribosome. The sequence is that of Small ribosomal subunit protein uS11 from Cereibacter sphaeroides (strain ATCC 17029 / ATH 2.4.9) (Rhodobacter sphaeroides).